A 410-amino-acid chain; its full sequence is uncharacterized protein (410 aa).

11–39 (VLVIGGGPSGTALSAELAARGLDVQQLAP) contacts NAD(+).

This sequence belongs to the lycopene cyclase family.

This is an uncharacterized protein from Deinococcus radiodurans (strain ATCC 13939 / DSM 20539 / JCM 16871 / CCUG 27074 / LMG 4051 / NBRC 15346 / NCIMB 9279 / VKM B-1422 / R1).